The primary structure comprises 307 residues: Probable RuBisCO transcriptional regulator (307 aa).

The HTH lysR-type domain maps to 4 to 61; it reads FTLQQLRILKAVATEKNFTKAAELLYLSQPSLSKQIKTLEKNLDILLVNRENNKISLT. The segment at residues 21–40 is a DNA-binding region (H-T-H motif); it reads FTKAAELLYLSQPSLSKQIK.

It belongs to the LysR transcriptional regulatory family.

It localises to the plastid. The protein localises to the chloroplast. Its function is as follows. Trans-acting transcriptional regulator of RuBisCO genes (rbcL and rbcS) expression. The polypeptide is Probable RuBisCO transcriptional regulator (rbcR) (Phaeodactylum tricornutum (strain CCAP 1055/1)).